We begin with the raw amino-acid sequence, 89 residues long: MANHKSAEKRARQTIKRTERNRFYRTRLKNITKAVREAVEAKDVNTANEALKLANKSIHSFVSKGFLKKQTAARRVSRLAQLVNTLKAA.

The interval 1–20 (MANHKSAEKRARQTIKRTER) is disordered.

The protein belongs to the bacterial ribosomal protein bS20 family.

Binds directly to 16S ribosomal RNA. This chain is Small ribosomal subunit protein bS20, found in Campylobacter curvus (strain 525.92).